A 435-amino-acid polypeptide reads, in one-letter code: Fez family zinc finger protein 2 (435 aa).

The Engrailed homology 1 repressor motif lies at serine 27–proline 42. C2H2-type zinc fingers lie at residues phenylalanine 254–histidine 276, phenylalanine 282–histidine 304, histidine 310–histidine 332, phenylalanine 338–histidine 360, tyrosine 366–histidine 388, and phenylalanine 394–histidine 417.

This sequence belongs to the krueppel C2H2-type zinc-finger protein family.

It is found in the nucleus. Transcription repressor. Component of the regulatory cascade that controls the development of dopaminergic (DA) and serotonergic (5HT) neurons. This chain is Fez family zinc finger protein 2 (fezf2), found in Xenopus tropicalis (Western clawed frog).